The sequence spans 51 residues: MRNKAKGFPNPISFNGNKANNADEHASKRPDGTTRDRPQERMRSSNHFNSL.

The tract at residues 1–51 is disordered; the sequence is MRNKAKGFPNPISFNGNKANNADEHASKRPDGTTRDRPQERMRSSNHFNSL. Residues 21-43 are compositionally biased toward basic and acidic residues; that stretch reads NADEHASKRPDGTTRDRPQERMR.

The protein belongs to the SspK family.

The protein resides in the spore core. This is Small, acid-soluble spore protein K from Shouchella clausii (strain KSM-K16) (Alkalihalobacillus clausii).